Reading from the N-terminus, the 490-residue chain is MTSFSTSAQCSTSDSACRISPGQINQVRPKLPLLKILHAAGAQGEMFTVKEVMHYLGQYIMVKQLYDQQEQHMVYCGGDLLGELLGRQSFSVKDPSPLYDMLRKNLVTLATATTDAAQTLALAQDHSMDIPSQDQLKQSAEESSTSRKRTTEDDIPTLPTSEHKCIHSREDEDLIENLAQDETSRLDLGFEEWDVAGLPWWFLGNLRSNYTPRSNGSTDLQTNQDVGTAIVSDTTDDLWFLNESVSEQLGVGIKVEAADTEQTSEEVGKVSDKKVIEVGKNDDLEDSKSLSDDTDVEVTSEDEWQCTECKKFNSPSKRYCFRCWALRKDWYSDCSKLTHSLSTSDITAIPEKENEGNDVPDCRRTISAPVVRPKDAYIKKENSKLFDPCNSVEFLDLAHSSESQETISSMGEQLDNLSEQRTDTENMEDCQNLLKPCSLCEKRPRDGNIIHGRTGHLVTCFHCARRLKKAGASCPICKKEIQLVIKVFIA.

An SWIB/MDM2 domain is found at 25–108; the sequence is NQVRPKLPLL…YDMLRKNLVT (84 aa). The interval 129–160 is disordered; that stretch reads DIPSQDQLKQSAEESSTSRKRTTEDDIPTLPT. Residues 130 to 143 are compositionally biased toward polar residues; the sequence is IPSQDQLKQSAEES. A region II region spans residues 246 to 332; it reads SEQLGVGIKV…CWALRKDWYS (87 aa). The RanBP2-type zinc finger occupies 300-329; sequence SEDEWQCTECKKFNSPSKRYCFRCWALRKD. S342 carries the phosphoserine; by CHEK2 modification. Phosphoserine; by CHEK1 and CHEK2 is present on S367. The interval 393-490 is necessary for interaction with USP2; sequence EFLDLAHSSE…IQLVIKVFIA (98 aa). An RING-type zinc finger spans residues 437 to 478; the sequence is CSLCEKRPRDGNIIHGRTGHLVTCFHCARRLKKAGASCPICK. The Nuclear localization signal motif lies at 442-445; it reads KRPR.

The protein belongs to the MDM2/MDM4 family. Interacts with MDM2. Interacts with TP53, TP73 and USP2. Found in a trimeric complex with USP2, MDM2 and MDM4. Interacts (phosphorylated) with YWHAG; negatively regulates MDM4 activity toward TP53. Post-translationally, phosphorylated. Phosphorylation at Ser-367 promotes interaction with YWHAG and subsequent ubiquitination and degradation. Phosphorylation at Ser-342 also induces ubiquitination and degradation but to a lower extent. In terms of processing, ubiquitinated and degraded by MDM2. Deubiquitination by USP2 on the other hand stabilizes the MDM4 protein. As to expression, expressed in all tissues tested with high levels in thymus.

Its subcellular location is the nucleus. In terms of biological role, along with MDM2, contributes to TP53 regulation. Inhibits p53/TP53- and TP73/p73-mediated cell cycle arrest and apoptosis by binding its transcriptional activation domain. Inhibits degradation of MDM2. Can reverse MDM2-targeted degradation of TP53 while maintaining suppression of TP53 transactivation and apoptotic functions. In Homo sapiens (Human), this protein is Protein Mdm4 (MDM4).